A 1558-amino-acid polypeptide reads, in one-letter code: Eukaryotic translation initiation factor 2-alpha kinase 1 (1558 aa).

A Protein kinase domain is found at 429–789 (FFEEKILGCG…AYNLLHESVL (361 aa)). Residues 435-443 (LGCGGFGYV) and lysine 458 contribute to the ATP site. The active-site Proton acceptor is the aspartate 660. Residues 1014-1033 (GTSTNNNNNNNNNNMGNNNI) form a disordered region.

The protein belongs to the protein kinase superfamily. Ser/Thr protein kinase family. GCN2 subfamily. Auto-phosphorylated.

The enzyme catalyses L-seryl-[protein] + ATP = O-phospho-L-seryl-[protein] + ADP + H(+). It catalyses the reaction L-threonyl-[protein] + ATP = O-phospho-L-threonyl-[protein] + ADP + H(+). In blood stage parasites, phosphorylates translation factor eIF2alpha in response to amino acid starvation. During the asexual blood stage, involved in the response to the host hormone melatonin which is used by the parasite to modulate its cell cycle. This Plasmodium falciparum (isolate 3D7) protein is Eukaryotic translation initiation factor 2-alpha kinase 1.